Here is a 173-residue protein sequence, read N- to C-terminus: uncharacterized protein (173 aa).

Positions 1 to 25 are cleaved as a signal peptide; it reads MPVVTAVGRRRGFAMPWVSTARSGA.

This is an uncharacterized protein from Mycobacterium bovis (strain ATCC BAA-935 / AF2122/97).